The primary structure comprises 196 residues: Cupin-domain-containing oxidoreductase srdD (196 aa).

The segment at 99 to 165 is cupin-like domain; it reads DFGPGVESPL…GNGTLPGRVM (67 aa).

Belongs to the virC family.

In terms of biological role, highly reducing polyketide synthase; part of the gene cluster that mediates the biosynthesis of sordarial, a salicylic aldehyde structurally related to the phytotoxin pyriculol. The most interesting aspect of this pathway is formation of an aromatic product from the highly reducing polyketide synthase srdA. SrdA synthesizes a reduced polyketide chain from one molecule of acetyl-CoA and five molecules of malonyl-CoA. The polyketide chain is then reductively released as an aldehyde. The oxidoreductases srdC, srdD and srdE then oxidize one of the hydroxy groups to facilitate the intramolecular aldol condensation, followed by dehydration to yield a salicylic aldehyde. This aldehyde can undergo facile reduction by endogenous reductases to yield the alcohol 1-hydroxy-2-hydroxymethyl-3-pent-1,3-dienylbenzene. The flavin-dependent srdI counteract against the propensity of the aldehydes to be reduced under physiological conditions and is responsible for reoxidizing 1-hydroxy-2-hydroxymethyl-3-pent-1,3-dienylbenzene back to the salicylic aldehyde. This salicylic aldehyde is then selectively epoxidized by the cupin-domain-containing oxidoreductase srdB to yield the epoxide, which can be hydrolyzed stereoselectively by the hydrolase srdG to give the final product sordarial. The chain is Cupin-domain-containing oxidoreductase srdD from Neurospora crassa (strain ATCC 24698 / 74-OR23-1A / CBS 708.71 / DSM 1257 / FGSC 987).